We begin with the raw amino-acid sequence, 124 residues long: Small ribosomal subunit protein bS6 (124 aa).

Residues 96–124 (ETGPSPMMKEVQREEAKKAAAAQPAEAQA) form a disordered region. Over residues 114 to 124 (AAAAQPAEAQA) the composition is skewed to low complexity.

It belongs to the bacterial ribosomal protein bS6 family.

Functionally, binds together with bS18 to 16S ribosomal RNA. The polypeptide is Small ribosomal subunit protein bS6 (Burkholderia orbicola (strain MC0-3)).